Consider the following 290-residue polypeptide: MSQGGGLNILSIQSSVAYGHVGNSAAVFPLQRLGIEVWAVNTVHFSNHTGYGEWRGPVLAAGDVSEVLRGIGERGVLGSCGAVLSGYMGDVSLGEVILGAVGRVRGANPQALFCCDPVMGDEGRGFFVRPGIPRFMRERAVPAADVVTPNQFELEYLAGVEVRTLGGALAAAEKVLGLGPGTVLVTSLRRRDAGEEGRIEMLAATREGAWLVGTPLLPLEVNGAGDATAALFLGHLLLGRGLEEALSLTASSVYAVLEKTLRRGAREIQLVAAQESLVAPPVRFPVRRVA.

Position 14 (Ser14) interacts with substrate. Residues Asp116 and Glu153 each contribute to the ATP site. Residue Asp226 coordinates substrate.

It belongs to the pyridoxine kinase family. PdxY subfamily. In terms of assembly, homodimer. The cofactor is Mg(2+).

It catalyses the reaction pyridoxal + ATP = pyridoxal 5'-phosphate + ADP + H(+). It participates in cofactor metabolism; pyridoxal 5'-phosphate salvage; pyridoxal 5'-phosphate from pyridoxal: step 1/1. Pyridoxal kinase involved in the salvage pathway of pyridoxal 5'-phosphate (PLP). Catalyzes the phosphorylation of pyridoxal to PLP. The protein is Pyridoxal kinase PdxY of Rubrobacter xylanophilus (strain DSM 9941 / JCM 11954 / NBRC 16129 / PRD-1).